Consider the following 357-residue polypeptide: Cytosolic Fe-S cluster assembly factor NAR1 (357 aa).

The [4Fe-4S] cluster site is built by cysteine 14, cysteine 28, cysteine 31, cysteine 34, cysteine 129, cysteine 172, cysteine 297, and cysteine 301.

It belongs to the NARF family.

Component of the cytosolic Fe/S protein assembly machinery. May play a role in the transfer of pre-assembled Fe/S clusters to target apoproteins. The chain is Cytosolic Fe-S cluster assembly factor NAR1 (NAR1) from Encephalitozoon cuniculi (strain GB-M1) (Microsporidian parasite).